A 581-amino-acid chain; its full sequence is Arginine--tRNA ligase (581 aa).

The short motif at 126–136 (PNLAKEMHVGH) is the 'HIGH' region element.

Belongs to the class-I aminoacyl-tRNA synthetase family. Monomer.

It is found in the cytoplasm. The enzyme catalyses tRNA(Arg) + L-arginine + ATP = L-arginyl-tRNA(Arg) + AMP + diphosphate. In Shewanella putrefaciens (strain CN-32 / ATCC BAA-453), this protein is Arginine--tRNA ligase.